Here is a 502-residue protein sequence, read N- to C-terminus: Cytochrome P450 71A8 (502 aa).

A helical transmembrane segment spans residues 16-36; sequence IISHTLAFQALVSLILLISIT. The disordered stretch occupies residues 93-119; that stretch reads PVSSRRRPRGNHENSRSRLRRPRGSRS. Heme is bound at residue Cys447.

This sequence belongs to the cytochrome P450 family. The cofactor is heme.

The protein localises to the membrane. In Mentha piperita (Peppermint), this protein is Cytochrome P450 71A8 (CYP71A8).